A 753-amino-acid chain; its full sequence is Polyadenylate-binding protein, cytoplasmic and nuclear (753 aa).

A compositionally biased stretch (low complexity) spans 1–43 (MSAEASTTPAAETPVNGTPETSTTPAAPAAEATAAETAAPSTS). Positions 1-49 (MSAEASTTPAAETPVNGTPETSTTPAAPAAEATAAETAAPSTSQPHSAS) are disordered. 4 consecutive RRM domains span residues 48 to 126 (ASLY…WSQR), 136 to 213 (GNVF…HHIS), 229 to 306 (TNVY…RAQK), and 332 to 460 (VNLY…LAQR). Disordered stretches follow at residues 363–417 (VMRD…SDKK), 607–649 (RGPG…PAAG), and 727–753 (GTEGEAAGEAPKPKEAATEESTEENKS). Residues 376–417 (DSDKEKKEESKEEKPEAAEKTEEAAKESGDDQDKENKKSDKK) show a composition bias toward basic and acidic residues. Gly residues predominate over residues 607–619 (RGPGYGQGRGGVP). Low complexity predominate over residues 633-649 (QNAQPAAGRGEEAPAAG). In terms of domain architecture, PABC spans 647 to 724 (AAGLTAQSLA…ALSVYDEYMK (78 aa)). The segment covering 737-753 (PKPKEAATEESTEENKS) has biased composition (basic and acidic residues).

Belongs to the polyadenylate-binding protein type-1 family.

The protein resides in the cytoplasm. It localises to the nucleus. Its function is as follows. Binds the poly(A) tail of mRNA. Appears to be an important mediator of the multiple roles of the poly(A) tail in mRNA biogenesis, stability and translation. In the nucleus, involved in both mRNA cleavage and polyadenylation. Is also required for efficient mRNA export to the cytoplasm. Acts in concert with a poly(A)-specific nuclease (PAN) to affect poly(A) tail shortening, which may occur concomitantly with either nucleocytoplasmic mRNA transport or translational initiation. In the cytoplasm, stimulates translation initiation and regulates mRNA decay through translation termination-coupled poly(A) shortening, probably mediated by PAN. This Aspergillus terreus (strain NIH 2624 / FGSC A1156) protein is Polyadenylate-binding protein, cytoplasmic and nuclear (pab1).